Consider the following 273-residue polypeptide: Rhamnulose-1-phosphate aldolase (273 aa).

Glu117 is a catalytic residue. 3 residues coordinate Zn(2+): His140, His142, and His211.

It belongs to the aldolase class II family. RhaD subfamily. Requires Zn(2+) as cofactor.

The protein resides in the cytoplasm. It carries out the reaction L-rhamnulose 1-phosphate = (S)-lactaldehyde + dihydroxyacetone phosphate. The protein operates within carbohydrate degradation; L-rhamnose degradation; glycerone phosphate from L-rhamnose: step 3/3. Functionally, catalyzes the reversible cleavage of L-rhamnulose-1-phosphate to dihydroxyacetone phosphate (DHAP) and L-lactaldehyde. The chain is Rhamnulose-1-phosphate aldolase from Listeria monocytogenes serovar 1/2a (strain ATCC BAA-679 / EGD-e).